The chain runs to 507 residues: Transcription factor CP2 (507 aa).

The Grh/CP2 DB domain maps to 61-300 (ENKILPFQYV…SPGFNSSHNS (240 aa)). The tract at residues 133-395 (EHQQLEGWRW…LFNALKGRMV (263 aa)) is DNA-binding. Disordered regions lie at residues 240–268 (PKGA…YQPS) and 296–316 (SSHN…QPEP). The segment covering 241 to 265 (KGADRKQKTDREKMEKRTPQEKEKY) has biased composition (basic and acidic residues).

Belongs to the grh/CP2 family. CP2 subfamily. In terms of assembly, component of the SSP (stage selector protein) complex, which appears to be a heteromer of TFCP2 and 2 copies of NFE4.

It localises to the nucleus. Its function is as follows. May function as a transcription factor. The polypeptide is Transcription factor CP2 (tfcp2) (Xenopus tropicalis (Western clawed frog)).